The following is a 122-amino-acid chain: Small ribosomal subunit protein bS6 (122 aa).

The protein belongs to the bacterial ribosomal protein bS6 family.

Functionally, binds together with bS18 to 16S ribosomal RNA. The chain is Small ribosomal subunit protein bS6 from Vibrio cholerae serotype O1 (strain ATCC 39541 / Classical Ogawa 395 / O395).